The following is a 799-amino-acid chain: Oligopeptide transporter 1 (799 aa).

2 disordered regions span residues 1–26 and 43–64; these read MSTI…PIQI and DVNN…QKFD. Over 1–108 the chain is Extracellular; sequence MSTIYRESDS…DPTIRLNHWR (108 aa). Residues 13-26 show a composition bias toward low complexity; sequence SEPSPTPTTIPIQI. N46 carries N-linked (GlcNAc...) asparagine glycosylation. Residues T48, T50, and T51 each carry the phosphothreonine modification. The helical transmembrane segment at 109–129 threads the bilayer; it reads TWFLTTVFVVVFAGVNQFFSL. The Cytoplasmic portion of the chain corresponds to 130–135; sequence RYPSLE. Residues 136-156 traverse the membrane as a helical segment; it reads INFLVAQVVCYPIGRILALLP. At 157-177 the chain is on the extracellular side; that stretch reads DWKCSKVPFFDLNPGPFTKKE. Residues 178–198 traverse the membrane as a helical segment; the sequence is HAVVTIAVALTSSTAYAMYIL. Residues 199-210 are Cytoplasmic-facing; that stretch reads NAQGSFYNMKLN. Residues 211–231 form a helical membrane-spanning segment; it reads VGYQFLLVWTSQMIGYGAAGL. Residues 232-276 lie on the Extracellular side of the membrane; that stretch reads TRRWVVNPASSIWPQTLISVSLFDSLHSRKVEKTVANGWTMPRYR. The chain crosses the membrane as a helical span at residues 277-297; the sequence is FFLIVLIGSFIWYWVPGFLFT. Topologically, residues 298 to 313 are cytoplasmic; the sequence is GLSYFNVILWGSKTRH. Residues 314–334 traverse the membrane as a helical segment; sequence NFIANTIFGTQSGLGALPITF. Residues 335–359 are Extracellular-facing; that stretch reads DYTQVSQAMSGSVFATPFYVSANTY. Residues 360–380 form a helical membrane-spanning segment; sequence ASVLIFFVIVLPCLYFTNTWY. Residues 381-428 are Cytoplasmic-facing; sequence AKYMPVISGSTYDNTQNKYNVTKILNEDYSINLEKYKEYSPVFVPFSY. A helical membrane pass occupies residues 429-449; sequence LLSYALNFAAVIAVFVHCILY. Residues 450–482 lie on the Extracellular side of the membrane; sequence HGKDIVAKFKDRKNGGTDIHMRIYSKNYKDCPD. Residues 483–503 traverse the membrane as a helical segment; that stretch reads WWYLLLQIVMIGLGFVAVCCF. Residues 504–508 are Cytoplasmic-facing; sequence DTKFP. Residues 509-529 form a helical membrane-spanning segment; it reads AWAFVIAILISLVNFIPQGIL. Topologically, residues 530 to 540 are extracellular; sequence EAMTNQHVGLN. The helical transmembrane segment at 541-561 threads the bilayer; the sequence is IITELICGYMLPLRPMANLLF. Residues 562–590 lie on the Cytoplasmic side of the membrane; the sequence is KLYGFIVMRQGLNLSRDLKLAMYMKVSPR. Residues 591–611 form a helical membrane-spanning segment; it reads LIFAVQIYATIISGMVNVGVQ. The Extracellular portion of the chain corresponds to 612-659; that stretch reads EWMMHNIDGLCTTDQPNGFTCANGRTVFNASIIWSLPKYLFSSGRIYN. N640 carries N-linked (GlcNAc...) asparagine glycosylation. The chain crosses the membrane as a helical span at residues 660 to 680; the sequence is PLMWFFLIGLLFPLAVYAVQW. The Cytoplasmic portion of the chain corresponds to 681-736; that stretch reads KFPKFKFAKHIHTPVFFTGPGNIPPSTPYNYSLFFAMSFCLNLIRKRWRAWFNKYN. The helical transmembrane segment at 737–757 threads the bilayer; sequence FVMGAGVEAGVAISVVIIFLC. At 758 to 799 the chain is on the extracellular side; that stretch reads VQYPGGKLSWWGNNVWKRTYDNDYKKFYTLKKGETFGYDKWW.

The protein belongs to the oligopeptide OPT transporter family.

It localises to the cell membrane. Its function is as follows. High affinity transporter for glutathione. Also transports tetra- and pentapeptides like the opioids leucine enkephalin (Tyr-Gly-Gly-Phe-Leu) and methionine enkephalin (Tyr-Gly-Gly_Phe-Met) across the cell membrane. This Saccharomyces cerevisiae (strain ATCC 204508 / S288c) (Baker's yeast) protein is Oligopeptide transporter 1 (OPT1).